The sequence spans 315 residues: Ribose-phosphate pyrophosphokinase (315 aa).

Residues 37–39 (DGE) and 96–97 (RQ) each bind ATP. 2 residues coordinate Mg(2+): H131 and D170. K194 is an active-site residue. D-ribose 5-phosphate contacts are provided by residues R196, D220, and 224–228 (DTGGT).

Belongs to the ribose-phosphate pyrophosphokinase family. Class I subfamily. In terms of assembly, homohexamer. Mg(2+) serves as cofactor.

The protein resides in the cytoplasm. The catalysed reaction is D-ribose 5-phosphate + ATP = 5-phospho-alpha-D-ribose 1-diphosphate + AMP + H(+). It participates in metabolic intermediate biosynthesis; 5-phospho-alpha-D-ribose 1-diphosphate biosynthesis; 5-phospho-alpha-D-ribose 1-diphosphate from D-ribose 5-phosphate (route I): step 1/1. Its function is as follows. Involved in the biosynthesis of the central metabolite phospho-alpha-D-ribosyl-1-pyrophosphate (PRPP) via the transfer of pyrophosphoryl group from ATP to 1-hydroxyl of ribose-5-phosphate (Rib-5-P). In Yersinia pestis, this protein is Ribose-phosphate pyrophosphokinase.